We begin with the raw amino-acid sequence, 146 residues long: UPF0178 protein OB0454 (146 aa).

Belongs to the UPF0178 family.

In Oceanobacillus iheyensis (strain DSM 14371 / CIP 107618 / JCM 11309 / KCTC 3954 / HTE831), this protein is UPF0178 protein OB0454.